Here is a 962-residue protein sequence, read N- to C-terminus: Glycine dehydrogenase (decarboxylating) (962 aa).

Lysine 709 carries the post-translational modification N6-(pyridoxal phosphate)lysine.

Belongs to the GcvP family. As to quaternary structure, the glycine cleavage system is composed of four proteins: P, T, L and H. Pyridoxal 5'-phosphate is required as a cofactor.

It carries out the reaction N(6)-[(R)-lipoyl]-L-lysyl-[glycine-cleavage complex H protein] + glycine + H(+) = N(6)-[(R)-S(8)-aminomethyldihydrolipoyl]-L-lysyl-[glycine-cleavage complex H protein] + CO2. Functionally, the glycine cleavage system catalyzes the degradation of glycine. The P protein binds the alpha-amino group of glycine through its pyridoxal phosphate cofactor; CO(2) is released and the remaining methylamine moiety is then transferred to the lipoamide cofactor of the H protein. The protein is Glycine dehydrogenase (decarboxylating) of Shewanella oneidensis (strain ATCC 700550 / JCM 31522 / CIP 106686 / LMG 19005 / NCIMB 14063 / MR-1).